We begin with the raw amino-acid sequence, 190 residues long: ADP-ribosylation factor-like protein 6 (190 aa).

The N-myristoyl glycine moiety is linked to residue Gly-2. GTP contacts are provided by residues 24–31 (GLDNSGKT), Thr-50, 69–73 (DMAGQ), Gly-72, 130–133 (NKMD), and Ala-164. Mg(2+)-binding residues include Thr-31 and Thr-50.

It belongs to the small GTPase superfamily. Arf family.

It localises to the cytoplasm. The protein is ADP-ribosylation factor-like protein 6 of Caenorhabditis briggsae.